We begin with the raw amino-acid sequence, 295 residues long: Protein LplC (295 aa).

Transmembrane regions (helical) follow at residues 21 to 41 (ILFLGGVGAITILPFLYIIAG), 81 to 101 (VSIFITVVGTAVQLFFTFTMA), 116 to 136 (LNLVIFSMLFSGGMIPTYLVV), 142 to 162 (LDTYWALILPMAINPFNLIII), 199 to 219 (VIATFALFYAVGIWNDFFHAL), and 260 to 280 (GIKLAVIVIATLPILAVYPFL). One can recognise an ABC transmembrane type-1 domain in the interval 79–280 (MGVSIFITVV…LPILAVYPFL (202 aa)).

It belongs to the binding-protein-dependent transport system permease family. CysTW subfamily.

It localises to the cell membrane. The chain is Protein LplC (lplC) from Bacillus subtilis (strain 168).